Here is a 361-residue protein sequence, read N- to C-terminus: MNKLALYCRSGFEKELAAEITEKATALGVFGFARVVENSGYVIFECYQIGEADLLARKITFSQLIFARQLIVVSDLISNLSVQDRISPIIEYYRQQEKILNLKQSSDIWVETADTNEAKTLAAFCRKFTVPLRQALRKQGWLQAKNKKSGITLHIFFTQSNSCYIGYSYNNNHAEHIMGIPRLKFPAEAPSRSTLKLEEAILYFIPPNQEATRFNENKYAVDLGACPGGWTYQLVRRGVFVYAVDHGKMATSLHETGRIEHCAEDGFKFRPPKHCKIDWLVCDMVEQPRRIADLISQWLVKGWCKETIFNLKLPMKKRYFEVQQCLRQIEDKLNKQNISFQLQAKHLYHDREEITVYIRLM.

S-adenosyl-L-methionine contacts are provided by residues Ser193, 226-229, Asp245, Asp265, and Asp283; that span reads CPGG. Lys312 serves as the catalytic Proton acceptor.

It belongs to the class I-like SAM-binding methyltransferase superfamily. RNA methyltransferase RlmE family. RlmM subfamily. In terms of assembly, monomer.

It is found in the cytoplasm. The enzyme catalyses cytidine(2498) in 23S rRNA + S-adenosyl-L-methionine = 2'-O-methylcytidine(2498) in 23S rRNA + S-adenosyl-L-homocysteine + H(+). Catalyzes the 2'-O-methylation at nucleotide C2498 in 23S rRNA. This is Ribosomal RNA large subunit methyltransferase M from Histophilus somni (strain 129Pt) (Haemophilus somnus).